Consider the following 229-residue polypeptide: Enolase-phosphatase E1 (229 aa).

Belongs to the HAD-like hydrolase superfamily. MasA/MtnC family. As to quaternary structure, monomer. Mg(2+) is required as a cofactor.

The catalysed reaction is 5-methylsulfanyl-2,3-dioxopentyl phosphate + H2O = 1,2-dihydroxy-5-(methylsulfanyl)pent-1-en-3-one + phosphate. Its pathway is amino-acid biosynthesis; L-methionine biosynthesis via salvage pathway; L-methionine from S-methyl-5-thio-alpha-D-ribose 1-phosphate: step 3/6. The protein operates within amino-acid biosynthesis; L-methionine biosynthesis via salvage pathway; L-methionine from S-methyl-5-thio-alpha-D-ribose 1-phosphate: step 4/6. In terms of biological role, bifunctional enzyme that catalyzes the enolization of 2,3-diketo-5-methylthiopentyl-1-phosphate (DK-MTP-1-P) into the intermediate 2-hydroxy-3-keto-5-methylthiopentenyl-1-phosphate (HK-MTPenyl-1-P), which is then dephosphorylated to form the acireductone 1,2-dihydroxy-3-keto-5-methylthiopentene (DHK-MTPene). The protein is Enolase-phosphatase E1 of Pectobacterium atrosepticum (strain SCRI 1043 / ATCC BAA-672) (Erwinia carotovora subsp. atroseptica).